The primary structure comprises 318 residues: Ribosomal RNA small subunit methyltransferase H (318 aa).

Residues 34-36 (GGY), aspartate 52, phenylalanine 79, aspartate 100, and glutamine 107 each bind S-adenosyl-L-methionine. The interval 286-318 (GPAPDEARANPRARSAKLRAAARTAAPAWETVS) is disordered. Positions 303-318 (LRAAARTAAPAWETVS) are enriched in low complexity.

It belongs to the methyltransferase superfamily. RsmH family.

It localises to the cytoplasm. It catalyses the reaction cytidine(1402) in 16S rRNA + S-adenosyl-L-methionine = N(4)-methylcytidine(1402) in 16S rRNA + S-adenosyl-L-homocysteine + H(+). Functionally, specifically methylates the N4 position of cytidine in position 1402 (C1402) of 16S rRNA. This is Ribosomal RNA small subunit methyltransferase H from Paramagnetospirillum magneticum (strain ATCC 700264 / AMB-1) (Magnetospirillum magneticum).